The sequence spans 80 residues: Small membrane A-kinase anchor protein (80 aa).

The N-myristoyl glycine moiety is linked to residue Gly2.

Belongs to the small membrane AKAP family. Post-translationally, may be palmitoylated at Cys-3.

It is found in the cell membrane. In terms of biological role, binds to type I regulatory subunits of protein kinase A and may anchor/target them to the plasma membrane. This Tetraodon nigroviridis (Spotted green pufferfish) protein is Small membrane A-kinase anchor protein.